A 229-amino-acid chain; its full sequence is Ribonuclease 3 (229 aa).

Positions 7–132 (LKAFEGRIGH…VIAAVYLDAG (126 aa)) constitute an RNase III domain. Mg(2+) is bound at residue Glu-45. Residue Asp-49 is part of the active site. Mg(2+)-binding residues include Asp-118 and Glu-121. Glu-121 is a catalytic residue. In terms of domain architecture, DRBM spans 157-226 (DAKTALQEWA…ARALLARMEA (70 aa)).

It belongs to the ribonuclease III family. Homodimer. Mg(2+) serves as cofactor.

Its subcellular location is the cytoplasm. It catalyses the reaction Endonucleolytic cleavage to 5'-phosphomonoester.. Functionally, digests double-stranded RNA. Involved in the processing of primary rRNA transcript to yield the immediate precursors to the large and small rRNAs (23S and 16S). Processes some mRNAs, and tRNAs when they are encoded in the rRNA operon. Processes pre-crRNA and tracrRNA of type II CRISPR loci if present in the organism. This is Ribonuclease 3 from Cereibacter sphaeroides (strain ATCC 17029 / ATH 2.4.9) (Rhodobacter sphaeroides).